We begin with the raw amino-acid sequence, 62 residues long: Conotoxin Mi5.2 (62 aa).

An N-terminal signal peptide occupies residues 1–19 (MRCVPVFIILLLLIPSASS). The propeptide occupies 20 to 50 (VDVQPLTRDDVPLASFLDDARRTLRSPWMTR).

It belongs to the conotoxin T superfamily. Contains 2 disulfide bonds that can be either 'C1-C3, C2-C4' or 'C1-C4, C2-C3', since these disulfide connectivities have been observed for conotoxins with cysteine framework V (for examples, see AC P0DQQ7 and AC P81755). Expressed by the venom duct.

It is found in the secreted. The chain is Conotoxin Mi5.2 from Conus miles (Soldier cone).